The sequence spans 259 residues: Glucosamine-6-phosphate deaminase (259 aa).

Aspartate 66 (proton acceptor; for enolization step) is an active-site residue. Aspartate 135 functions as the For ring-opening step in the catalytic mechanism. Histidine 137 functions as the Proton acceptor; for ring-opening step in the catalytic mechanism. The For ring-opening step role is filled by glutamate 142.

It belongs to the glucosamine/galactosamine-6-phosphate isomerase family. NagB subfamily.

It carries out the reaction alpha-D-glucosamine 6-phosphate + H2O = beta-D-fructose 6-phosphate + NH4(+). It functions in the pathway amino-sugar metabolism; N-acetylneuraminate degradation; D-fructose 6-phosphate from N-acetylneuraminate: step 5/5. Its function is as follows. Catalyzes the reversible isomerization-deamination of glucosamine 6-phosphate (GlcN6P) to form fructose 6-phosphate (Fru6P) and ammonium ion. The sequence is that of Glucosamine-6-phosphate deaminase from Pseudarthrobacter chlorophenolicus (strain ATCC 700700 / DSM 12829 / CIP 107037 / JCM 12360 / KCTC 9906 / NCIMB 13794 / A6) (Arthrobacter chlorophenolicus).